A 652-amino-acid polypeptide reads, in one-letter code: Nucleolar GTP-binding protein 1 (652 aa).

The OBG-type G domain maps to Arg-169–Leu-341. GTP contacts are provided by residues Gly-175–Ser-182, Asp-221–Ile-225, and Asn-289–Asp-292. The interval Arg-501–Asp-521 is disordered.

Belongs to the TRAFAC class OBG-HflX-like GTPase superfamily. OBG GTPase family. NOG subfamily.

The protein resides in the nucleus. It localises to the nucleolus. Functionally, involved in the biogenesis of the 60S ribosomal subunit. Required for normal assembly of the mitotic spindle. May be involved in both centrosome-dependent and centrosome-independent spindle assembly programs. Acts as a TP53 repressor, preventing TP53 stabilization and cell cycle arrest. In Drosophila melanogaster (Fruit fly), this protein is Nucleolar GTP-binding protein 1.